The following is a 190-amino-acid chain: Xanthine phosphoribosyltransferase (190 aa).

The xanthine site is built by leucine 20 and asparagine 27. Position 128–132 (alanine 128–alanine 132) interacts with 5-phospho-alpha-D-ribose 1-diphosphate. Lysine 156 is a xanthine binding site.

Belongs to the purine/pyrimidine phosphoribosyltransferase family. Xpt subfamily. In terms of assembly, homodimer.

The protein resides in the cytoplasm. The enzyme catalyses XMP + diphosphate = xanthine + 5-phospho-alpha-D-ribose 1-diphosphate. The protein operates within purine metabolism; XMP biosynthesis via salvage pathway; XMP from xanthine: step 1/1. In terms of biological role, converts the preformed base xanthine, a product of nucleic acid breakdown, to xanthosine 5'-monophosphate (XMP), so it can be reused for RNA or DNA synthesis. The chain is Xanthine phosphoribosyltransferase from Pseudomonas paraeruginosa (strain DSM 24068 / PA7) (Pseudomonas aeruginosa (strain PA7)).